Reading from the N-terminus, the 742-residue chain is MATKFPSFSQGLAQDPTTRRIWYGIATAHDFESHDGMTEEQLYQKLFSTHFGHLAIIGLWVAGNLFHIAWQGNFEQWVLDPLHTRPIAHAIWDPHFGQGLTDALTQAGATSPVNIAYSGLYHWWYTIGMRTNEQLFQGAIFINILVCWLLFAGWLHLQPKYRPSLAWFKNAESQLNHHLAVLFGFSSIAWTGHLIHVAIPESRGIHVGWENWLTVMPHPEGLTPFFSGNWGAYAQNPDSIDAVFGTSQGAGTAIFTFLGGLHPQSESLWLTDIAHHHLAIGVVFIIAGHMYRTNFGIGHSLKEIIEAHNTSHPKDPHRGYFGIKHNGLFETVNNSLHFQLGLALASLGVACSLVAQHMGALPSYAFIARDYTTQSALYTHHQYIAMFLMVGAFSHGAIFFVRDYDPELNKDNVLARILSTKEALISHLSWVTMLLGFHTLGIYVHNDVVVAFGTPEKQILIEPVFAQFAQAASGKMMYGFNALLANASSSASIAANSMPGNHYWMDMINRPDALTNFLPIGPADFLVHHAIALGLHTTALILIKGALDARGTKLIPDKKDLGFAFPCDGPGRGGTCDSSSWDATYLAMFWALNTIAWITFYWHWKHLAIWMGNTAQFNESGTYLMGWFRDYLWLNSSQLINGYNPFGVNALSPWAWMFLFGHLIWATGFMFLISWRGYWQELIETLVWAHQRTPIANLVGWRDKPVALSIVQARLVGLTHFTVGNFVTFGAFVIASTSGKFG.

8 helical membrane passes run 46–69, 135–158, 175–199, 273–291, 336–359, 375–401, 423–445, and 525–543; these read LFST…FHIA, LFQG…LHLQ, LNHH…HVAI, IAHH…GHMY, LHFQ…QHMG, SALY…IFFV, ALIS…IYVH, and FLVH…LILI. Positions 567 and 576 each coordinate [4Fe-4S] cluster. Transmembrane regions (helical) follow at residues 583–604 and 651–673; these read ATYL…YWHW and LSPW…MFLI. Divinyl chlorophyll a-binding residues include H662, M670, and Y678. W679 is a phylloquinone binding site. The chain crosses the membrane as a helical span at residues 715-735; that stretch reads LVGLTHFTVGNFVTFGAFVIA.

The protein belongs to the PsaA/PsaB family. As to quaternary structure, the PsaA/B heterodimer binds the P700 divinyl chlorophyll special pair and subsequent electron acceptors. PSI consists of a core antenna complex that captures photons, and an electron transfer chain that converts photonic excitation into a charge separation. The cyanobacterial PSI reaction center is composed of one copy each of PsaA,B,C,D,E,F,I,J,K,L,M and X, and forms trimeric complexes. It depends on PSI electron transfer chain: 5 divinyl chlorophyll a, 1 divinyl chlorophyll a', 2 phylloquinones and 3 4Fe-4S clusters. PSI core antenna: 90 divinyl chlorophyll a, 22 carotenoids, 3 phospholipids and 1 galactolipid. P700 is a divinyl chlorophyll a/divinyl chlorophyll a' dimer, A0 is one or more divinyl chlorophyll a, A1 is one or both phylloquinones and FX is a shared 4Fe-4S iron-sulfur center. as a cofactor.

The protein localises to the cellular thylakoid membrane. It carries out the reaction reduced [plastocyanin] + hnu + oxidized [2Fe-2S]-[ferredoxin] = oxidized [plastocyanin] + reduced [2Fe-2S]-[ferredoxin]. Functionally, psaA and PsaB bind P700, the primary electron donor of photosystem I (PSI), as well as the electron acceptors A0, A1 and FX. PSI is a plastocyanin/cytochrome c6-ferredoxin oxidoreductase, converting photonic excitation into a charge separation, which transfers an electron from the donor P700 chlorophyll pair to the spectroscopically characterized acceptors A0, A1, FX, FA and FB in turn. Oxidized P700 is reduced on the lumenal side of the thylakoid membrane by plastocyanin or cytochrome c6. The sequence is that of Photosystem I P700 chlorophyll a apoprotein A2 from Prochlorococcus marinus (strain NATL2A).